We begin with the raw amino-acid sequence, 362 residues long: NAD(P)H-quinone oxidoreductase subunit 1, chloroplastic (362 aa).

8 consecutive transmembrane segments (helical) span residues 31-51 (WVPL…LVIV), 99-119 (WLFT…YLVV), 132-152 (IGIF…LMSG), 178-198 (LAIC…VDIV), 206-226 (ILTW…IAAL), 268-288 (LVSG…PFAI), 303-323 (AFLG…AAIL), and 336-356 (LLDL…LLTA).

The protein belongs to the complex I subunit 1 family. In terms of assembly, NDH is composed of at least 16 different subunits, 5 of which are encoded in the nucleus.

Its subcellular location is the plastid. The protein resides in the chloroplast thylakoid membrane. It catalyses the reaction a plastoquinone + NADH + (n+1) H(+)(in) = a plastoquinol + NAD(+) + n H(+)(out). The enzyme catalyses a plastoquinone + NADPH + (n+1) H(+)(in) = a plastoquinol + NADP(+) + n H(+)(out). Functionally, NDH shuttles electrons from NAD(P)H:plastoquinone, via FMN and iron-sulfur (Fe-S) centers, to quinones in the photosynthetic chain and possibly in a chloroplast respiratory chain. The immediate electron acceptor for the enzyme in this species is believed to be plastoquinone. Couples the redox reaction to proton translocation, and thus conserves the redox energy in a proton gradient. The polypeptide is NAD(P)H-quinone oxidoreductase subunit 1, chloroplastic (Nephroselmis olivacea (Green alga)).